The following is a 185-amino-acid chain: MANEIVTTAQDRMKQSLGSLQRDLGHIRAGRANASLLDRVQVVYYGAPTPLNQLASITIPEARVLMVTPFDKSILKDIEKALYESDLGITPANDGSVIRLVIPMLTEERRRELVKEMGKYIESAKVAIRNIRRDAMDTAKKSEKAKEITEDDLKDLENNIQKVTDDAVKEADRLASIKEKELLDI.

This sequence belongs to the RRF family.

The protein resides in the cytoplasm. In terms of biological role, responsible for the release of ribosomes from messenger RNA at the termination of protein biosynthesis. May increase the efficiency of translation by recycling ribosomes from one round of translation to another. This chain is Ribosome-recycling factor, found in Lactococcus lactis subsp. lactis (strain IL1403) (Streptococcus lactis).